Consider the following 121-residue polypeptide: Large ribosomal subunit protein bL12 (121 aa).

The protein belongs to the bacterial ribosomal protein bL12 family. As to quaternary structure, homodimer. Part of the ribosomal stalk of the 50S ribosomal subunit. Forms a multimeric L10(L12)X complex, where L10 forms an elongated spine to which 2 to 4 L12 dimers bind in a sequential fashion. Binds GTP-bound translation factors.

Its function is as follows. Forms part of the ribosomal stalk which helps the ribosome interact with GTP-bound translation factors. Is thus essential for accurate translation. The sequence is that of Large ribosomal subunit protein bL12 from Streptococcus agalactiae serotype Ia (strain ATCC 27591 / A909 / CDC SS700).